We begin with the raw amino-acid sequence, 263 residues long: 5'-nucleotidase SurE (263 aa).

A divalent metal cation-binding residues include aspartate 8, aspartate 9, serine 40, and asparagine 93.

The protein belongs to the SurE nucleotidase family. It depends on a divalent metal cation as a cofactor.

The protein localises to the cytoplasm. The enzyme catalyses a ribonucleoside 5'-phosphate + H2O = a ribonucleoside + phosphate. Functionally, nucleotidase that shows phosphatase activity on nucleoside 5'-monophosphates. This Beijerinckia indica subsp. indica (strain ATCC 9039 / DSM 1715 / NCIMB 8712) protein is 5'-nucleotidase SurE.